We begin with the raw amino-acid sequence, 1026 residues long: Adenylate-forming reductase 06235 (1026 aa).

An adenylation (A) domain region spans residues 37 to 422 (FEFHAKANPD…LGRIDNQVKI (386 aa)). AMP contacts are provided by residues 332-333 (VT) and 412-415 (HLGR). A thiolation and peptide carrier (T) domain region spans residues 556 to 638 (SLVSTVGSTV…ALFIWILVTK (83 aa)). A reductase (R) domain region spans residues 682-901 (CIRRVCARIY…PPTKMWVKGV (220 aa)). NADP(+) contacts are provided by residues 685-688 (RVCA), 769-771 (TAL), and Y840.

Belongs to the adenylate-forming reductase family.

Functionally, adenylate-forming reductase, a natural product biosynthesis enzyme that resembles non-ribosomal peptide synthetases, yet serves to modify one substrate, rather than to condense two or more building blocks. The A-domain preferentially accepts L-serine, L-alanine and L-valine as substrates. The natural product of the enzyme is not yet known. The sequence is that of Adenylate-forming reductase 06235 from Coprinopsis cinerea (strain Okayama-7 / 130 / ATCC MYA-4618 / FGSC 9003) (Inky cap fungus).